A 142-amino-acid chain; its full sequence is Hemoglobin subunit alpha (142 aa).

The Globin domain occupies 2–142; that stretch reads HLTADDKKHI…VSNVLTSKYR (141 aa). Residues His-59 and His-88 each contribute to the heme b site.

It belongs to the globin family. As to quaternary structure, heterotetramer of two alpha chains and two beta chains. As to expression, red blood cells.

Functionally, involved in oxygen transport from the lung to the various peripheral tissues. The polypeptide is Hemoglobin subunit alpha (hba-A) (Xenopus tropicalis (Western clawed frog)).